The primary structure comprises 163 residues: Crossover junction endodeoxyribonuclease RuvC (163 aa).

Catalysis depends on residues Asp7, Glu68, and His142. Residues Asp7, Glu68, and His142 each contribute to the Mg(2+) site.

Belongs to the RuvC family. In terms of assembly, homodimer which binds Holliday junction (HJ) DNA. The HJ becomes 2-fold symmetrical on binding to RuvC with unstacked arms; it has a different conformation from HJ DNA in complex with RuvA. In the full resolvosome a probable DNA-RuvA(4)-RuvB(12)-RuvC(2) complex forms which resolves the HJ. It depends on Mg(2+) as a cofactor.

The protein localises to the cytoplasm. The catalysed reaction is Endonucleolytic cleavage at a junction such as a reciprocal single-stranded crossover between two homologous DNA duplexes (Holliday junction).. In terms of biological role, the RuvA-RuvB-RuvC complex processes Holliday junction (HJ) DNA during genetic recombination and DNA repair. Endonuclease that resolves HJ intermediates. Cleaves cruciform DNA by making single-stranded nicks across the HJ at symmetrical positions within the homologous arms, yielding a 5'-phosphate and a 3'-hydroxyl group; requires a central core of homology in the junction. The consensus cleavage sequence is 5'-(A/T)TT(C/G)-3'. Cleavage occurs on the 3'-side of the TT dinucleotide at the point of strand exchange. HJ branch migration catalyzed by RuvA-RuvB allows RuvC to scan DNA until it finds its consensus sequence, where it cleaves and resolves the cruciform DNA. The polypeptide is Crossover junction endodeoxyribonuclease RuvC (Anaplasma phagocytophilum (strain HZ)).